The sequence spans 694 residues: Elongation factor G (694 aa).

One can recognise a tr-type G domain in the interval 8–287 (EDYRNFGIMA…AVVEFLPAPT (280 aa)). GTP-binding positions include 17–24 (AHIDAGKT), 86–90 (DTPGH), and 140–143 (NKMD).

It belongs to the TRAFAC class translation factor GTPase superfamily. Classic translation factor GTPase family. EF-G/EF-2 subfamily.

It is found in the cytoplasm. In terms of biological role, catalyzes the GTP-dependent ribosomal translocation step during translation elongation. During this step, the ribosome changes from the pre-translocational (PRE) to the post-translocational (POST) state as the newly formed A-site-bound peptidyl-tRNA and P-site-bound deacylated tRNA move to the P and E sites, respectively. Catalyzes the coordinated movement of the two tRNA molecules, the mRNA and conformational changes in the ribosome. In Brucella melitensis biotype 1 (strain ATCC 23456 / CCUG 17765 / NCTC 10094 / 16M), this protein is Elongation factor G.